The following is a 727-amino-acid chain: Epithelial splicing regulatory protein 2 (727 aa).

A disordered region spans residues methionine 1–aspartate 22. A Phosphoserine modification is found at serine 83. RRM domains lie at threonine 257–serine 353, valine 358–alanine 438, and aspartate 475–threonine 555. Position 573 is a phosphoserine (serine 573).

The protein belongs to the ESRP family. In terms of assembly, interacts with RBPMS. As to expression, epithelial cell-specific.

Its subcellular location is the nucleus. Its function is as follows. mRNA splicing factor that regulates the formation of epithelial cell-specific isoforms. Specifically regulates the expression of FGFR2-IIIb, an epithelial cell-specific isoform of FGFR2. Also regulates the splicing of CD44, CTNND1, ENAH, 3 transcripts that undergo changes in splicing during the epithelial-to-mesenchymal transition (EMT). Acts by directly binding specific sequences in mRNAs. Binds the GU-rich sequence motifs in the ISE/ISS-3, a cis-element regulatory region present in the mRNA of FGFR2. The chain is Epithelial splicing regulatory protein 2 (ESRP2) from Homo sapiens (Human).